The following is a 419-amino-acid chain: MSFIPVAEDSDFPIHNLPYGVFSTRGDPRPRIGVAIGDQILDLSIIKHLFTGPVLSKHQDVFNQPTLNSFMGLGQAAWKEARVFLQNLLSVSQARLRDDTELRKCAFISQASATMHLPATIGDYTDFYSSRQHATNVGIMFRDKENALMPNWLHLPVGYHGRASSVVVSGTPIRRPMGQMKPDDSKPPVYGACKLLDMELEMAFFVGPGNRLGEPIPISKAHEHIFGMVLMNDWSARDIQKWEYVPLGPFLGKSFGTTVSPWVVPMDALMPFAVPNPKQDPRPLPYLCHDEPYTFDINLSVNLKGEGMSQAATICKSNFKYMYWTMLQQLTHHSVNGCNLRPGDLLASGTISGPEPENFGSMLELSWKGTKPIDLGNGQTRKFLLDGDEVIITGYCQGDGYRIGFGQCAGKVLPALLPS.

An N-acetylserine modification is found at serine 2. Serine 92 bears the Phosphoserine mark. Ca(2+) is bound at residue aspartate 126. Position 128 (tyrosine 128) interacts with substrate. Histidine 133 (proton acceptor) is an active-site residue. Substrate is bound at residue arginine 142. Positions 199, 201, and 233 each coordinate Ca(2+). Mg(2+) is bound at residue aspartate 233. 2 residues coordinate substrate: glutamine 240 and tyrosine 244. Mg(2+) contacts are provided by lysine 253 and threonine 257. Serine 309 carries the post-translational modification Phosphoserine. Threonine 350 lines the substrate pocket. Residue tyrosine 395 is modified to Phosphotyrosine.

The protein belongs to the FAH family. As to quaternary structure, homodimer. Ca(2+) is required as a cofactor. It depends on Mg(2+) as a cofactor. Mainly expressed in liver and kidney. Lower levels are also detected in many other tissues.

The catalysed reaction is 4-fumarylacetoacetate + H2O = acetoacetate + fumarate + H(+). It participates in amino-acid degradation; L-phenylalanine degradation; acetoacetate and fumarate from L-phenylalanine: step 6/6. The protein is Fumarylacetoacetase (FAH) of Homo sapiens (Human).